We begin with the raw amino-acid sequence, 234 residues long: Thymidylate kinase (234 aa).

21–28 (GGEGTGKS) provides a ligand contact to ATP.

It belongs to the thymidylate kinase family.

It catalyses the reaction dTMP + ATP = dTDP + ADP. Functionally, phosphorylation of dTMP to form dTDP in both de novo and salvage pathways of dTTP synthesis. The polypeptide is Thymidylate kinase (Rhizobium meliloti (strain 1021) (Ensifer meliloti)).